Here is a 336-residue protein sequence, read N- to C-terminus: Holliday junction branch migration complex subunit RuvB (336 aa).

Positions 1–175 are large ATPase domain (RuvB-L); the sequence is MEKYSFESVQ…FGMSFRLQFY (175 aa). ATP-binding positions include Leu-14, Arg-15, Gly-56, Lys-59, Thr-60, Thr-61, 122 to 124, Arg-165, Tyr-175, and Arg-212; that span reads EDF. Mg(2+) is bound at residue Thr-60. The interval 176–253 is small ATPAse domain (RuvB-S); that stretch reads EPKELSAIVI…CVRYALNELG (78 aa). The tract at residues 256–336 is head domain (RuvB-H); it reads ELGFDELDLR…IPFLEQKGLF (81 aa). Positions 310 and 315 each coordinate DNA.

Belongs to the RuvB family. As to quaternary structure, homohexamer. Forms an RuvA(8)-RuvB(12)-Holliday junction (HJ) complex. HJ DNA is sandwiched between 2 RuvA tetramers; dsDNA enters through RuvA and exits via RuvB. An RuvB hexamer assembles on each DNA strand where it exits the tetramer. Each RuvB hexamer is contacted by two RuvA subunits (via domain III) on 2 adjacent RuvB subunits; this complex drives branch migration. In the full resolvosome a probable DNA-RuvA(4)-RuvB(12)-RuvC(2) complex forms which resolves the HJ.

The protein resides in the cytoplasm. The catalysed reaction is ATP + H2O = ADP + phosphate + H(+). The RuvA-RuvB-RuvC complex processes Holliday junction (HJ) DNA during genetic recombination and DNA repair, while the RuvA-RuvB complex plays an important role in the rescue of blocked DNA replication forks via replication fork reversal (RFR). RuvA specifically binds to HJ cruciform DNA, conferring on it an open structure. The RuvB hexamer acts as an ATP-dependent pump, pulling dsDNA into and through the RuvAB complex. RuvB forms 2 homohexamers on either side of HJ DNA bound by 1 or 2 RuvA tetramers; 4 subunits per hexamer contact DNA at a time. Coordinated motions by a converter formed by DNA-disengaged RuvB subunits stimulates ATP hydrolysis and nucleotide exchange. Immobilization of the converter enables RuvB to convert the ATP-contained energy into a lever motion, pulling 2 nucleotides of DNA out of the RuvA tetramer per ATP hydrolyzed, thus driving DNA branch migration. The RuvB motors rotate together with the DNA substrate, which together with the progressing nucleotide cycle form the mechanistic basis for DNA recombination by continuous HJ branch migration. Branch migration allows RuvC to scan DNA until it finds its consensus sequence, where it cleaves and resolves cruciform DNA. This Helicobacter hepaticus (strain ATCC 51449 / 3B1) protein is Holliday junction branch migration complex subunit RuvB.